A 555-amino-acid chain; its full sequence is Glutamate--tRNA ligase (555 aa).

Residues 103-113 carry the 'HIGH' region motif; it reads PNPSGPLHIGH.

Belongs to the class-I aminoacyl-tRNA synthetase family. Glutamate--tRNA ligase type 2 subfamily.

The protein resides in the cytoplasm. It catalyses the reaction tRNA(Glu) + L-glutamate + ATP = L-glutamyl-tRNA(Glu) + AMP + diphosphate. Functionally, catalyzes the attachment of glutamate to tRNA(Glu) in a two-step reaction: glutamate is first activated by ATP to form Glu-AMP and then transferred to the acceptor end of tRNA(Glu). The sequence is that of Glutamate--tRNA ligase from Methanobrevibacter smithii (strain ATCC 35061 / DSM 861 / OCM 144 / PS).